A 179-amino-acid chain; its full sequence is Large ribosomal subunit protein uL6c (179 aa).

Belongs to the universal ribosomal protein uL6 family. In terms of assembly, part of the 50S ribosomal subunit.

It localises to the plastid. Its subcellular location is the chloroplast. Functionally, binds 23S rRNA. The protein is Large ribosomal subunit protein uL6c (rpl6) of Trieres chinensis (Marine centric diatom).